Here is a 229-residue protein sequence, read N- to C-terminus: uncharacterized protein (229 aa).

7 helical membrane-spanning segments follow: residues 6 to 26 (LFFV…FLPT), 36 to 56 (LVSV…ILLA), 80 to 99 (SVYD…HRIY), 114 to 134 (VLSV…HLII), 144 to 164 (IFEY…ATML), 174 to 194 (FYYH…IYKF), and 207 to 224 (YVEA…VLSS).

Belongs to the mimivirus L68/R809 family.

It is found in the membrane. This is an uncharacterized protein from Acanthamoeba polyphaga (Amoeba).